Consider the following 233-residue polypeptide: MSCNQQKECCKKECQEKECCKECCCPRIKAFKKFINTFEKAQIGKEAPEFKAPAYCPCGSIKEIDINEYRGKYVVLLFYPLDWTFVCPTEMIGYSELAGQLKEINCEVIGVSVDSVYCHQAWCEADKSKGGVGKLTFPLVSDIKRCISIKYGMLNVEAGIARRGYVIIDDKGKVRYIQMNDDGIGRSTEETIRIVKAIQFSDEHGAVCPLNWKPGKDTIEPTPDGIKKYLTAH.

Residues 41–200 (AQIGKEAPEF…TIRIVKAIQF (160 aa)) enclose the Thioredoxin domain. Cys87 acts as the Cysteine sulfenic acid (-SOH) intermediate in catalysis.

It belongs to the peroxiredoxin family. AhpC/Prx1 subfamily. Homodimer; disulfide-linked, upon oxidation.

The protein localises to the cell membrane. It carries out the reaction a hydroperoxide + [thioredoxin]-dithiol = an alcohol + [thioredoxin]-disulfide + H2O. In terms of biological role, thiol-specific peroxidase that catalyzes the reduction of hydrogen peroxide and organic hydroperoxides to water and alcohols, respectively. Plays a role in cell protection against oxidative stress by detoxifying peroxides and as sensor of hydrogen peroxide-mediated signaling events. In Entamoeba histolytica (strain ATCC 30459 / HM-1:IMSS / ABRM), this protein is Putative peroxiredoxin.